We begin with the raw amino-acid sequence, 1140 residues long: uncharacterized protein (1140 aa).

7 disordered regions span residues 1 to 49, 97 to 243, 280 to 427, 512 to 541, 702 to 747, 916 to 1059, and 1080 to 1103; these read MGSS…TSPE, SSDI…STIS, TSSS…KSSV, ASST…DLSK, FSTP…STAS, CPEK…PIGR, and LSSS…GTSS. Positions 105-129 are enriched in polar residues; that stretch reads VNDVESSTSGPSNSYSALSSTNAQL. Low complexity-rich tracts occupy residues 130-154, 172-214, and 221-243; these read SSST…TSSS, TTAS…TTSD, and SSST…STIS. Positions 516–528 are enriched in polar residues; the sequence is LGSKVSSSNSRMA. 2 stretches are compositionally biased toward low complexity: residues 529–541 and 703–718; these read TSKT…DLSK and STPE…VTSE. The segment covering 719-733 has biased composition (polar residues); it reads APSTVSSMTTSAPFI. Low complexity predominate over residues 734 to 747; it reads NNSTSARPSPSTAS. Positions 949 to 961 are enriched in basic and acidic residues; it reads SFKDMKTSQETKK. A compositionally biased stretch (low complexity) spans 977-997; it reads EKTSPTTKASPSTSPSESKAA. Composition is skewed to polar residues over residues 998-1023, 1031-1055, and 1089-1103; these read GNTS…STSV, TKNS…STES, and RSTT…GTSS.

This is an uncharacterized protein from Saccharomyces cerevisiae (strain ATCC 204508 / S288c) (Baker's yeast).